The sequence spans 319 residues: MSLNFLEFEKPIAELEAKVEALREISRRGGENALDLEKEIKQLEDKCLELKKKTFSDLGAWEVAQLARHPERPYVLDYIEHMFTEFDELAGDRAFADDKALVGGIARLDGRPVMVIGHQKGRGTKEKVIRNFGMPKPEGYRKAKRLMQMAERFNMPVITFIDTAGAYPGVGAEERGQSEAIAMNLKIMSELSVPVICNVVGEGGSGGALAIGVGDYVNMLQYSTYSVISPEGCASILWRDSDKAPQAAEAMGLVAPRLKELELIDTIIDEPLGGAHRDHKATAENIKQRLLEQLKELDAFDNEALLERRYQRLMSYGYC.

One can recognise a CoA carboxyltransferase C-terminal domain in the interval 35–296 (DLEKEIKQLE…KQRLLEQLKE (262 aa)).

The protein belongs to the AccA family. As to quaternary structure, acetyl-CoA carboxylase is a heterohexamer composed of biotin carboxyl carrier protein (AccB), biotin carboxylase (AccC) and two subunits each of ACCase subunit alpha (AccA) and ACCase subunit beta (AccD).

It localises to the cytoplasm. The catalysed reaction is N(6)-carboxybiotinyl-L-lysyl-[protein] + acetyl-CoA = N(6)-biotinyl-L-lysyl-[protein] + malonyl-CoA. Its pathway is lipid metabolism; malonyl-CoA biosynthesis; malonyl-CoA from acetyl-CoA: step 1/1. Functionally, component of the acetyl coenzyme A carboxylase (ACC) complex. First, biotin carboxylase catalyzes the carboxylation of biotin on its carrier protein (BCCP) and then the CO(2) group is transferred by the carboxyltransferase to acetyl-CoA to form malonyl-CoA. This chain is Acetyl-coenzyme A carboxylase carboxyl transferase subunit alpha, found in Aliivibrio fischeri (strain ATCC 700601 / ES114) (Vibrio fischeri).